Reading from the N-terminus, the 184-residue chain is Photosystem I assembly protein Ycf4 (184 aa).

Transmembrane regions (helical) follow at residues 21–41 (YFWA…GLSS) and 63–83 (IIMT…WLTI).

Belongs to the Ycf4 family.

The protein localises to the plastid. It localises to the chloroplast thylakoid membrane. Seems to be required for the assembly of the photosystem I complex. This Gracilaria tenuistipitata var. liui (Red alga) protein is Photosystem I assembly protein Ycf4.